Consider the following 471-residue polypeptide: Glutamate--tRNA ligase (471 aa).

The short motif at Pro-9–Gly-19 is the 'HIGH' region element. Positions 98, 100, 125, and 127 each coordinate Zn(2+). Positions Lys-237–Arg-241 match the 'KMSKS' region motif. Lys-240 contributes to the ATP binding site.

It belongs to the class-I aminoacyl-tRNA synthetase family. Glutamate--tRNA ligase type 1 subfamily. As to quaternary structure, monomer. Zn(2+) is required as a cofactor.

The protein localises to the cytoplasm. The enzyme catalyses tRNA(Glu) + L-glutamate + ATP = L-glutamyl-tRNA(Glu) + AMP + diphosphate. Its function is as follows. Catalyzes the attachment of glutamate to tRNA(Glu) in a two-step reaction: glutamate is first activated by ATP to form Glu-AMP and then transferred to the acceptor end of tRNA(Glu). This Escherichia coli O1:K1 / APEC protein is Glutamate--tRNA ligase.